A 3779-amino-acid polypeptide reads, in one-letter code: Protein DDB_G0268328 (3779 aa).

Disordered stretches follow at residues 24 to 56 (RQIK…KDGS), 1001 to 1028 (HEDE…DDDD), 1137 to 1165 (QDST…QQQQ), 1513 to 1538 (PTNS…SLLS), 1656 to 1690 (ETTV…NNKE), 2027 to 2054 (SNSS…DSNN), 2144 to 2184 (NNNN…NNSS), 2280 to 2325 (ISTT…NEQQ), 2508 to 2527 (QINN…REEG), 2720 to 2748 (DGNN…NDSS), 2975 to 3030 (ESND…DSIK), and 3427 to 3450 (QSNT…SGKL). Low complexity-rich tracts occupy residues 26–56 (IKSQ…KDGS), 1011–1020 (DNSNNSNSQD), 1149–1165 (YYHQ…QQQQ), and 1515–1538 (NSIY…SLLS). Residues 1656–1671 (ETTVLEKETKETKDNN) are compositionally biased toward basic and acidic residues. Over residues 1672 to 1687 (LENNNNNTNNSNNNNN) the composition is skewed to low complexity. 2 stretches are compositionally biased toward low complexity: residues 2144–2182 (NNNN…NNNN) and 2285–2322 (NNNN…NNNN). 2 stretches are compositionally biased toward low complexity: residues 2722-2745 (NNNN…QNNN) and 3015-3030 (SVNN…DSIK). Gly residues predominate over residues 3433 to 3446 (GTGGGGGNGGGNNG).

The sequence is that of Protein DDB_G0268328 from Dictyostelium discoideum (Social amoeba).